The following is a 127-amino-acid chain: Fluoride-specific ion channel FluC (127 aa).

Helical transmembrane passes span 4-24, 36-56, 68-88, and 99-119; these read SILA…FLGL, GTLL…AYFA, LIIT…AEVV, and AAGA…LGLF. Residues glycine 75 and threonine 78 each contribute to the Na(+) site.

It belongs to the fluoride channel Fluc/FEX (TC 1.A.43) family.

The protein resides in the cell inner membrane. It carries out the reaction fluoride(in) = fluoride(out). Its activity is regulated as follows. Na(+) is not transported, but it plays an essential structural role and its presence is essential for fluoride channel function. Functionally, fluoride-specific ion channel. Important for reducing fluoride concentration in the cell, thus reducing its toxicity. This chain is Fluoride-specific ion channel FluC, found in Pseudomonas paraeruginosa (strain DSM 24068 / PA7) (Pseudomonas aeruginosa (strain PA7)).